The primary structure comprises 57 residues: UPF0391 membrane protein Xaut_1725 (57 aa).

2 helical membrane-spanning segments follow: residues 4 to 24 (WAVT…GGIA) and 30 to 50 (IAKI…VAGL).

It belongs to the UPF0391 family.

It is found in the cell membrane. The protein is UPF0391 membrane protein Xaut_1725 of Xanthobacter autotrophicus (strain ATCC BAA-1158 / Py2).